An 86-amino-acid chain; its full sequence is MMKIIIFLIVSSLVLIGVKTDNGYLLDKYTGCKVWCVINNESCNSECKIRRGNYGYCYFWKLACYCEGAPKSELWHYETNKCNGRM.

Residues 1–20 (MMKIIIFLIVSSLVLIGVKT) form the signal peptide. The LCN-type CS-alpha/beta domain maps to 21–83 (DNGYLLDKYT…LWHYETNKCN (63 aa)). Intrachain disulfides connect Cys-32–Cys-82, Cys-36–Cys-57, Cys-43–Cys-64, and Cys-47–Cys-66.

In terms of tissue distribution, expressed by the venom gland.

It is found in the secreted. Inhibits sodium channels (Nav). Also moderately inhibits human calcium-activated potassium channel KCa1.1/KCNMA1/BK (41.9% decrease at 2 uM toxin concentration). Shows moderate antimicrobial activity against both Gram-positive and -negative bacteria. The sequence is that of MeuNaTxbeta-1 from Mesobuthus eupeus (Lesser Asian scorpion).